Consider the following 105-residue polypeptide: UPF0145 protein GK1405 (105 aa).

The protein belongs to the UPF0145 family.

The polypeptide is UPF0145 protein GK1405 (Geobacillus kaustophilus (strain HTA426)).